The sequence spans 374 residues: 4-hydroxy-3-methylbut-2-en-1-yl diphosphate synthase (flavodoxin) (374 aa).

Cys268, Cys271, Cys303, and Glu310 together coordinate [4Fe-4S] cluster.

The protein belongs to the IspG family. Requires [4Fe-4S] cluster as cofactor.

The catalysed reaction is (2E)-4-hydroxy-3-methylbut-2-enyl diphosphate + oxidized [flavodoxin] + H2O + 2 H(+) = 2-C-methyl-D-erythritol 2,4-cyclic diphosphate + reduced [flavodoxin]. The protein operates within isoprenoid biosynthesis; isopentenyl diphosphate biosynthesis via DXP pathway; isopentenyl diphosphate from 1-deoxy-D-xylulose 5-phosphate: step 5/6. In terms of biological role, converts 2C-methyl-D-erythritol 2,4-cyclodiphosphate (ME-2,4cPP) into 1-hydroxy-2-methyl-2-(E)-butenyl 4-diphosphate. This chain is 4-hydroxy-3-methylbut-2-en-1-yl diphosphate synthase (flavodoxin), found in Geobacillus kaustophilus (strain HTA426).